Here is a 352-residue protein sequence, read N- to C-terminus: Protein RecA (352 aa).

67–74 serves as a coordination point for ATP; the sequence is GPESSGKT. Residues 330–352 are disordered; it reads STPKPEAESQEKAAAAQDDDSLV.

Belongs to the RecA family.

It localises to the cytoplasm. Can catalyze the hydrolysis of ATP in the presence of single-stranded DNA, the ATP-dependent uptake of single-stranded DNA by duplex DNA, and the ATP-dependent hybridization of homologous single-stranded DNAs. It interacts with LexA causing its activation and leading to its autocatalytic cleavage. This Chromohalobacter salexigens (strain ATCC BAA-138 / DSM 3043 / CIP 106854 / NCIMB 13768 / 1H11) protein is Protein RecA.